The chain runs to 272 residues: CD40 ligand (272 aa).

The Cytoplasmic segment spans residues 1–23 (MNEAYSPAAPRPMGSTSPSTMKM). Residues 24–44 (FMCFLSVFMVVQTIGTVLFCL) traverse the membrane as a helical; Signal-anchor for type II membrane protein segment. Over 45–272 (YLHMKMDKME…GNTYFGMFKL (228 aa)) the chain is Extracellular. N-linked (GlcNAc...) asparagine glycans are attached at residues asparagine 124 and asparagine 146. Positions 136–272 (IATHLAGVKS…GNTYFGMFKL (137 aa)) constitute a THD domain. Cysteine 190 and cysteine 229 are oxidised to a cystine. Asparagine 251 carries an N-linked (GlcNAc...) asparagine glycan.

Belongs to the tumor necrosis factor family. As to quaternary structure, homotrimer. Interacts with CD28. CD40 ligand, soluble form: Exists as either a monomer or a homotrimer. Forms a ternary complex between CD40 and integrins for CD40-CD40LG signaling. In terms of processing, the soluble form derives from the membrane form by proteolytic processing.

Its subcellular location is the cell membrane. It localises to the cell surface. The protein resides in the secreted. Functionally, cytokine that acts as a ligand to CD40/TNFRSF5. Costimulates T-cell proliferation and cytokine production. Induces the activation of NF-kappa-B. Mediates B-cell proliferation in the absence of co-stimulus as well as IgE production in the presence of IL4. Involved in immunoglobulin class switching. In terms of biological role, acts as a ligand for integrins, specifically ITGA5:ITGB1 and ITGAV:ITGB3; both integrins and the CD40 receptor are required for activation of CD40-CD40LG signaling, which have cell-type dependent effects, such as B-cell activation, NF-kappa-B signaling and anti-apoptotic signaling. The sequence is that of CD40 ligand (CD40LG) from Gallus gallus (Chicken).